Consider the following 649-residue polypeptide: ATP-dependent zinc metalloprotease FtsH (649 aa).

Over 1 to 18 (MQCSYPLARQLERSSALN) the chain is Cytoplasmic. The chain crosses the membrane as a helical span at residues 19–39 (NNLFQKAAIWLVIALVLFTVF). Residues 40 to 115 (KQFDKPRAQD…VTGKADDEPN (76 aa)) are Periplasmic-facing. Residues 116-136 (VLVQALYYLGPTLLIIVFWFY) traverse the membrane as a helical segment. Residues 137–649 (MMRQMQGGGK…PATARADETV (513 aa)) lie on the Cytoplasmic side of the membrane. 210 to 217 (GPPGTGKT) lines the ATP pocket. Position 432 (H432) interacts with Zn(2+). E433 is a catalytic residue. Residues H436 and D508 each coordinate Zn(2+). The interval 606–649 (IMAGRPPRPPRGAQGPNSGGNTPPGGSPVAPTNAPATARADETV) is disordered. The segment covering 616-626 (RGAQGPNSGGN) has biased composition (low complexity).

In the central section; belongs to the AAA ATPase family. The protein in the C-terminal section; belongs to the peptidase M41 family. Homohexamer. The cofactor is Zn(2+).

It is found in the cell inner membrane. Acts as a processive, ATP-dependent zinc metallopeptidase for both cytoplasmic and membrane proteins. Plays a role in the quality control of integral membrane proteins. This chain is ATP-dependent zinc metalloprotease FtsH, found in Cupriavidus metallidurans (strain ATCC 43123 / DSM 2839 / NBRC 102507 / CH34) (Ralstonia metallidurans).